The chain runs to 585 residues: Proline--tRNA ligase (585 aa).

Belongs to the class-II aminoacyl-tRNA synthetase family. ProS type 1 subfamily. Homodimer.

The protein localises to the cytoplasm. The catalysed reaction is tRNA(Pro) + L-proline + ATP = L-prolyl-tRNA(Pro) + AMP + diphosphate. Its function is as follows. Catalyzes the attachment of proline to tRNA(Pro) in a two-step reaction: proline is first activated by ATP to form Pro-AMP and then transferred to the acceptor end of tRNA(Pro). As ProRS can inadvertently accommodate and process non-cognate amino acids such as alanine and cysteine, to avoid such errors it has two additional distinct editing activities against alanine. One activity is designated as 'pretransfer' editing and involves the tRNA(Pro)-independent hydrolysis of activated Ala-AMP. The other activity is designated 'posttransfer' editing and involves deacylation of mischarged Ala-tRNA(Pro). The misacylated Cys-tRNA(Pro) is not edited by ProRS. The protein is Proline--tRNA ligase of Cutibacterium acnes (strain DSM 16379 / KPA171202) (Propionibacterium acnes).